Consider the following 106-residue polypeptide: UPF0145 protein BH0643 (106 aa).

The protein belongs to the UPF0145 family.

This chain is UPF0145 protein BH0643, found in Halalkalibacterium halodurans (strain ATCC BAA-125 / DSM 18197 / FERM 7344 / JCM 9153 / C-125) (Bacillus halodurans).